The following is a 130-amino-acid chain: Small ribosomal subunit protein uS9 (130 aa).

The protein belongs to the universal ribosomal protein uS9 family.

This Geotalea uraniireducens (strain Rf4) (Geobacter uraniireducens) protein is Small ribosomal subunit protein uS9.